A 513-amino-acid polypeptide reads, in one-letter code: ATP synthase subunit alpha (513 aa).

Residue 169-176 (GDRQTGKT) participates in ATP binding.

The protein belongs to the ATPase alpha/beta chains family. As to quaternary structure, F-type ATPases have 2 components, CF(1) - the catalytic core - and CF(0) - the membrane proton channel. CF(1) has five subunits: alpha(3), beta(3), gamma(1), delta(1), epsilon(1). CF(0) has three main subunits: a(1), b(2) and c(9-12). The alpha and beta chains form an alternating ring which encloses part of the gamma chain. CF(1) is attached to CF(0) by a central stalk formed by the gamma and epsilon chains, while a peripheral stalk is formed by the delta and b chains.

The protein localises to the cell inner membrane. The catalysed reaction is ATP + H2O + 4 H(+)(in) = ADP + phosphate + 5 H(+)(out). In terms of biological role, produces ATP from ADP in the presence of a proton gradient across the membrane. The alpha chain is a regulatory subunit. In Glaesserella parasuis serovar 5 (strain SH0165) (Haemophilus parasuis), this protein is ATP synthase subunit alpha.